The primary structure comprises 292 residues: Troponin I (292 aa).

Ser-1 carries the N-acetylserine modification. Residues 1–149 form a disordered region; that stretch reads SSLEERRAAR…GLGGLSPEKK (149 aa). The segment covering 46-55 has biased composition (low complexity); sequence YSAPAEPAYD. The segment covering 58–134 has biased composition (basic and acidic residues); sequence AENRRRQQQE…EARRMAEEQK (77 aa). Positions 237–250 are actin-binding; the sequence is DTKGKFVKPVLRKV. A disordered region spans residues 255–292; that stretch reads SKLDKIQRKEAKKSDFRDNLKSSREHEADKEGGEGENE.

It belongs to the troponin I family.

Its function is as follows. Troponin I is the inhibitory subunit of troponin, the thin filament regulatory complex which confers calcium-sensitivity to striated muscle actomyosin ATPase activity. This Chlamys nipponensis akazara (Akazara scallop) protein is Troponin I.